A 630-amino-acid chain; its full sequence is Probable potassium transport system protein Kup 2 (630 aa).

The next 12 membrane-spanning stretches (helical) occupy residues 14–34 (ATGFGALTLGSIGVVFGDIGT), 56–76 (VIVLGVLSLILWSLLIVVTAK), 108–128 (VPLLVLGVIGASMFIGDSMIT), 145–165 (PALQHYVVPLTVGILVALFAF), 176–196 (AFGPVMVLWFSTLAVLGLLHI), 214–234 (FMLSHGVIALVTIGAVFLAVT), 255–275 (WLFFVLPSLLLNYFGQGAMVL), 293–313 (LLVPMILLATAATVIASQAVI), 352–372 (MLLLAGVLLLVLLFHSSSALA), 375–395 (YGIAVSTTMVVDGVMGFVVVW), 402–422 (PAAAAALIIPFVAVDAIFFSA), and 427–447 (LMEGAWVPLLFGFLMAMLVWT).

Belongs to the HAK/KUP transporter (TC 2.A.72) family.

Its subcellular location is the cell inner membrane. It carries out the reaction K(+)(in) + H(+)(in) = K(+)(out) + H(+)(out). Its function is as follows. Transport of potassium into the cell. Likely operates as a K(+):H(+) symporter. The sequence is that of Probable potassium transport system protein Kup 2 from Rhodopseudomonas palustris (strain BisA53).